The sequence spans 189 residues: Protein OPG107 (189 aa).

Over 1-28 the chain is Intravirion; sequence MDKTTLSVNACNLEYVREKAIVGVQAAK. Residues 29-49 traverse the membrane as a helical; Signal-anchor for type III membrane protein segment; that stretch reads TSTLIFFVIILAISALLLWFQ. Residues 50–189 lie on the Virion surface side of the membrane; the sequence is TSDNPVFNEL…HWCSDFSNME (140 aa).

This sequence belongs to the orthopoxvirus OPG107 family. Part of a stable entry-fusion complex (EFC) which is at least composed of proteins OPG143, OPG147, OPG155, OPG86, OPG94, OPG107, OPG104, and OPG099. Formation of the viral membrane is necessary for the assembly of the complex. Post-translationally, contains two intramolecular disulfide bonds. They are created by the viral disulfide bond formation pathway, a poxvirus-specific pathway that operates on the cytoplasmic side of the MV membranes.

It is found in the virion membrane. Its subcellular location is the host endoplasmic reticulum membrane. In terms of biological role, envelope protein part of the entry-fusion complex responsible for the virus membrane fusion with host cell membrane during virus entry. Also plays a role in cell-cell fusion (syncytium formation). This Bos taurus (Bovine) protein is Protein OPG107 (OPG107).